A 228-amino-acid chain; its full sequence is Large ribosomal subunit protein mL64 (228 aa).

2 disordered regions span residues 20–44 and 186–228; these read PRSRSYHAPPPPRRRPAPHWPDREN and QRKR…KPSS. Residues 98–207 are a coiled coil; that stretch reads TMQESLRVQQ…KKEARIAAMA (110 aa). The short motif at 184-200 is the Nuclear localization signal element; that stretch reads KQQRKRLKEERQRQKKE. Basic and acidic residues predominate over residues 186-202; it reads QRKRLKEERQRQKKEAR. The span at 212–228 shows a compositional bias: low complexity; sequence QDSAEAQDSAASGKPSS.

The protein belongs to the mitochondrion-specific ribosomal protein mL64 family. Component of the mitochondrial ribosome large subunit (39S) which comprises a 16S rRNA and about 50 distinct proteins. Interacts with GADD45A, GADD45B and GADD45G. Interacts with NR4A1 via the NR4A1 AB domain. Interacts with ATAD3A and ATAD3B.

It localises to the mitochondrion. The protein resides in the nucleus. In terms of biological role, acts as a negative regulator of G1 to S cell cycle phase progression by inhibiting cyclin-dependent kinases. Inhibitory effects are additive with GADD45 proteins but also occur in the absence of GADD45 proteins. Acts as a repressor of the orphan nuclear receptor NR4A1 by inhibiting AB domain-mediated transcriptional activity. May be involved in the hormone-mediated regulation of NR4A1 transcriptional activity. May play a role in mitochondrial protein synthesis. This chain is Large ribosomal subunit protein mL64 (Gadd45gip1), found in Rattus norvegicus (Rat).